A 241-amino-acid polypeptide reads, in one-letter code: Large ribosomal subunit protein uL2 (241 aa).

The disordered stretch occupies residues 201-241 (VDHPHGGGNRQHPGRPTTVSRHAPPGRKVGSIAAKRTGLKR).

Belongs to the universal ribosomal protein uL2 family. As to quaternary structure, part of the 50S ribosomal subunit. Forms a bridge to the 30S subunit in the 70S ribosome.

One of the primary rRNA binding proteins. Required for association of the 30S and 50S subunits to form the 70S ribosome, for tRNA binding and peptide bond formation. It has been suggested to have peptidyltransferase activity; this is somewhat controversial. Makes several contacts with the 16S rRNA in the 70S ribosome. The protein is Large ribosomal subunit protein uL2 of Methanobrevibacter smithii (strain ATCC 35061 / DSM 861 / OCM 144 / PS).